Reading from the N-terminus, the 511-residue chain is Lysine--tRNA ligase (511 aa).

Mg(2+)-binding residues include Glu-422 and Glu-429.

This sequence belongs to the class-II aminoacyl-tRNA synthetase family. In terms of assembly, homodimer. Requires Mg(2+) as cofactor.

The protein resides in the cytoplasm. The catalysed reaction is tRNA(Lys) + L-lysine + ATP = L-lysyl-tRNA(Lys) + AMP + diphosphate. The polypeptide is Lysine--tRNA ligase (Chlorobaculum tepidum (strain ATCC 49652 / DSM 12025 / NBRC 103806 / TLS) (Chlorobium tepidum)).